A 142-amino-acid chain; its full sequence is Hemoglobin subunit alpha (142 aa).

The Globin domain occupies 2-142 (VLSANDKSNV…VGNVLTSKYR (141 aa)). Histidine 59 contributes to the O2 binding site. Histidine 88 lines the heme b pocket.

The protein belongs to the globin family. As to quaternary structure, heterotetramer of two alpha chains and two beta chains. In terms of tissue distribution, red blood cells.

In terms of biological role, involved in oxygen transport from the lung to the various peripheral tissues. This chain is Hemoglobin subunit alpha (HBA), found in Aptenodytes forsteri (Emperor penguin).